The primary structure comprises 233 residues: Ras-related protein Rab-20 (233 aa).

Residues G17, K18, T19, D32, and T36 each contribute to the GTP site. Residue T19 coordinates Mg(2+). Short sequence motifs (switch) lie at residues 28–41 (RRFP…GGAF) and 55–72 (DTAG…YCRG). Residues T36 and D55 each coordinate Mg(2+). The GTP site is built by G58, N113, K114, and D116. Basic and acidic residues predominate over residues 119–130 (SERDTEGGEKEG). The segment at 119–138 (SERDTEGGEKEGPASGKVGS) is disordered. GTP-binding residues include A183 and K184. Residues C231 and C232 are each lipidated (S-geranylgeranyl cysteine).

It belongs to the small GTPase superfamily. Rab family. Mg(2+) serves as cofactor. Present in a variety of tissues, but not in brain.

Its subcellular location is the cytoplasmic vesicle. The protein resides in the phagosome. It localises to the phagosome membrane. The protein localises to the golgi apparatus. The catalysed reaction is GTP + H2O = GDP + phosphate + H(+). Its activity is regulated as follows. Regulated by guanine nucleotide exchange factors (GEFs) which promote the exchange of bound GDP for free GTP. Regulated by GTPase activating proteins (GAPs) which increase the GTP hydrolysis activity. Inhibited by GDP dissociation inhibitors (GDIs). In terms of biological role, plays a role in apical endocytosis/recycling. Plays a role in the maturation and acidification of phagosomes that engulf pathogens, such as S.aureus and Mycobacterium. Plays a role in the fusion of phagosomes with lysosomes. The polypeptide is Ras-related protein Rab-20 (Mus musculus (Mouse)).